The sequence spans 615 residues: Leucine aminopeptidase 2 (615 aa).

A peptide-binding positions include 139-141 and 271-276; these read QCQ and PYGGME. Residue histidine 300 participates in Zn(2+) binding. The active-site Proton acceptor is glutamate 301. Residues histidine 304 and glutamate 323 each contribute to the Zn(2+) site. Tyrosine 386 acts as the Proton donor in catalysis.

Belongs to the peptidase M1 family. The cofactor is Zn(2+).

Its subcellular location is the cytoplasm. The protein localises to the nucleus. It catalyses the reaction an epoxide + H2O = an ethanediol. Functionally, aminopeptidase that preferentially cleaves di- and tripeptides. Also has low epoxide hydrolase activity (in vitro). Can hydrolyze the epoxide leukotriene LTA(4) but it forms preferentially 5,6-dihydroxy-7,9,11,14-eicosatetraenoic acid rather than the cytokine leukotriene B(4) as the product compared to the homologous mammalian enzyme (in vitro). This chain is Leucine aminopeptidase 2, found in Aspergillus oryzae (strain ATCC 42149 / RIB 40) (Yellow koji mold).